The primary structure comprises 425 residues: Pleckstrin homology domain-containing family A member 2 (425 aa).

Positions 7-113 (QNRICGFLDI…WVEALNQASK (107 aa)) constitute a PH 1 domain. Lys-141 is covalently cross-linked (Glycyl lysine isopeptide (Lys-Gly) (interchain with G-Cter in SUMO2)). Ser-184 is modified (phosphoserine). In terms of domain architecture, PH 2 spans 198–298 (PLIKSGYCVK…WIEGIGAAVQ (101 aa)). The span at 310 to 331 (SRSISLTRPGSSTLTSAPNSIL) shows a compositional bias: polar residues. The segment at 310-425 (SRSISLTRPG…DDENIRTSDV (116 aa)) is disordered. Phosphoserine occurs at positions 314 and 349. Basic and acidic residues-rich tracts occupy residues 363–375 (AEEK…HAPE) and 400–410 (RSEPQHPKEKP).

As to quaternary structure, binds MPDZ and PTPN13.

It is found in the cytoplasm. Its subcellular location is the cell membrane. The protein localises to the nucleus. In terms of biological role, binds specifically to phosphatidylinositol 3,4-diphosphate (PtdIns3,4P2), but not to other phosphoinositides. May recruit other proteins to the plasma membrane. This is Pleckstrin homology domain-containing family A member 2 (Plekha2) from Mus musculus (Mouse).